The following is a 90-amino-acid chain: Large ribosomal subunit protein bL27 (90 aa).

The disordered stretch occupies residues 1-21 (MASKKAGGSTRNGRDSEAKRL).

Belongs to the bacterial ribosomal protein bL27 family.

The sequence is that of Large ribosomal subunit protein bL27 from Neisseria meningitidis serogroup C (strain 053442).